Reading from the N-terminus, the 258-residue chain is MTLIHPTAVIDPKAELDSGVKVGAYTVIGPNVQIGANTEIGPHAVINGHTSIGENNRIFQFASLGEIPQDKKYRDEPTKLIIGNGNTIREFTTFNLGTVTGIGETRIGDDNWIMAYCHLAHDCVIGNHTIFANNASLAGHVTIGDYVVLGGYTLVFQFCRIGDYAMTAFAAGVHKDVPPYFMASGYRAEPAGLNSEGMRRNGFTAEQISAVKDVYKTLYHRGIPFEEAKADILRRAETQAELAVFRDFFAQSARGIIR.

Belongs to the transferase hexapeptide repeat family. LpxA subfamily. As to quaternary structure, homotrimer.

The protein resides in the cytoplasm. It carries out the reaction a (3R)-hydroxyacyl-[ACP] + UDP-N-acetyl-alpha-D-glucosamine = a UDP-3-O-[(3R)-3-hydroxyacyl]-N-acetyl-alpha-D-glucosamine + holo-[ACP]. It participates in glycolipid biosynthesis; lipid IV(A) biosynthesis; lipid IV(A) from (3R)-3-hydroxytetradecanoyl-[acyl-carrier-protein] and UDP-N-acetyl-alpha-D-glucosamine: step 1/6. In terms of biological role, involved in the biosynthesis of lipid A, a phosphorylated glycolipid that anchors the lipopolysaccharide to the outer membrane of the cell. This is Acyl-[acyl-carrier-protein]--UDP-N-acetylglucosamine O-acyltransferase from Neisseria meningitidis serogroup B (strain ATCC BAA-335 / MC58).